We begin with the raw amino-acid sequence, 579 residues long: Effector protein HopAB3 (579 aa).

Disordered stretches follow at residues 1 to 140, 214 to 294, and 384 to 408; these read MAGI…TGAV, VRQQ…NQVP, and PARA…PDSA. Positions 1-336 are host recognition; Pto interaction; it reads MAGINGAGPS…LRAALERHIL (336 aa). Composition is skewed to low complexity over residues 23 to 39, 89 to 101, 219 to 248, 266 to 281, and 384 to 402; these read ASGG…SSNS, RPQE…APQA, ASAP…ESSS, NQRR…ASQR, and PARA…ATVS. The segment at 337 to 579 is E3 ubiquitin-protein ligase; sequence HRRPIPMDIA…IAKYAFRIVP (243 aa).

This sequence belongs to the HopAB family. As to quaternary structure, interacts physically with plant cell Pto. Post-translationally, auto-ubiquitinated.

Its subcellular location is the secreted. Functionally, effector protein involved in gene-for-gene resistance in tomato plants. It is recognized by the host Pto resistance protein and elicits Pto and Prf-dependent hypersensitive response (HR) and programmed cell death (PCD), resulting in host immunity. In susceptible plants, acts as a virulence factor by suppressing PCD and HR-based plant immunity. This function requires its E3 ubiquitin ligase activity probably by recruiting E2 enzymes and transferring ubiquitin molecules to cellular proteins involved in regulation of PCD and targeting them for degradation. Enhances the development of disease symptoms and bacterial growth. This is Effector protein HopAB3 (hopAB3) from Pseudomonas syringae pv. tomato.